The chain runs to 168 residues: Small ribosomal subunit protein uS5 (168 aa).

Residues 11 to 74 (YSEKVVKIDR…EAAKKHLVKI (64 aa)) form the S5 DRBM domain.

The protein belongs to the universal ribosomal protein uS5 family. In terms of assembly, part of the 30S ribosomal subunit. Contacts proteins S4 and S8.

Functionally, with S4 and S12 plays an important role in translational accuracy. In terms of biological role, located at the back of the 30S subunit body where it stabilizes the conformation of the head with respect to the body. The polypeptide is Small ribosomal subunit protein uS5 (Leptospira borgpetersenii serovar Hardjo-bovis (strain JB197)).